A 414-amino-acid chain; its full sequence is Histidine--tRNA ligase (414 aa).

The protein belongs to the class-II aminoacyl-tRNA synthetase family. In terms of assembly, homodimer.

It localises to the cytoplasm. The catalysed reaction is tRNA(His) + L-histidine + ATP = L-histidyl-tRNA(His) + AMP + diphosphate + H(+). The polypeptide is Histidine--tRNA ligase (hisS) (Mycoplasma pneumoniae (strain ATCC 29342 / M129 / Subtype 1) (Mycoplasmoides pneumoniae)).